The primary structure comprises 85 residues: RNA-binding protein Hfq (85 aa).

Residues 10–69 (DPFLNILRKEHVPVSIYLVNGIKLQGQIESFDQYVVLLKNTVTQMVYKHAISTVVPARPV) form the Sm domain.

It belongs to the Hfq family. As to quaternary structure, homohexamer.

Functionally, RNA chaperone that binds small regulatory RNA (sRNAs) and mRNAs to facilitate mRNA translational regulation in response to envelope stress, environmental stress and changes in metabolite concentrations. Also binds with high specificity to tRNAs. The sequence is that of RNA-binding protein Hfq from Laribacter hongkongensis (strain HLHK9).